The chain runs to 243 residues: Glucosamine-6-phosphate deaminase (243 aa).

Aspartate 67 (proton acceptor; for enolization step) is an active-site residue. The active-site For ring-opening step is asparagine 137. The Proton acceptor; for ring-opening step role is filled by histidine 139. The For ring-opening step role is filled by glutamate 144.

Belongs to the glucosamine/galactosamine-6-phosphate isomerase family. NagB subfamily.

It catalyses the reaction alpha-D-glucosamine 6-phosphate + H2O = beta-D-fructose 6-phosphate + NH4(+). It participates in amino-sugar metabolism; N-acetylneuraminate degradation; D-fructose 6-phosphate from N-acetylneuraminate: step 5/5. Its function is as follows. Catalyzes the reversible isomerization-deamination of glucosamine 6-phosphate (GlcN6P) to form fructose 6-phosphate (Fru6P) and ammonium ion. The protein is Glucosamine-6-phosphate deaminase of Staphylococcus epidermidis (strain ATCC 35984 / DSM 28319 / BCRC 17069 / CCUG 31568 / BM 3577 / RP62A).